A 297-amino-acid polypeptide reads, in one-letter code: Palmitoyl-protein thioesterase ABHD10, mitochondrial (297 aa).

The transit peptide at 1–43 (MAAWVPCRKWGWAAVSFGRHRGLIASLARKPPWAWWLSACRQK) directs the protein to the mitochondrion. In terms of domain architecture, AB hydrolase-1 spans 69–181 (IIFIPGYLSN…GVVTQFHSLP (113 aa)). Catalysis depends on charge relay system residues serine 143, aspartate 240, and histidine 270.

The protein belongs to the AB hydrolase superfamily. In terms of tissue distribution, expressed in epididymal sperm but not in testicular sperm (at protein level).

The protein resides in the mitochondrion. It carries out the reaction S-hexadecanoyl-L-cysteinyl-[protein] + H2O = L-cysteinyl-[protein] + hexadecanoate + H(+). It catalyses the reaction mycophenolic acid O-acyl-beta-D-glucuronide + H2O = mycophenolate + D-glucuronate + H(+). Inhibited by palmostatin-B. In terms of biological role, acts as an acyl-protein thioesterase that hydrolyzes fatty acids from acylated residues in proteins. Regulates the mitochondrial S-depalmitoylation of the nucleophilic active site residue of peroxiredoxin-5/PRDX5, a key antioxidant protein, therefore modulating mitochondrial antioxidant ability. Also catalyzes the deglucuronidation of mycophenolic acid acyl-glucuronide, an active metabolite of the immunosuppressant drug mycophenolate. The sequence is that of Palmitoyl-protein thioesterase ABHD10, mitochondrial from Rattus norvegicus (Rat).